The following is a 78-amino-acid chain: UPF0349 protein RBAM_029300 (78 aa).

The protein belongs to the UPF0349 family.

This Bacillus velezensis (strain DSM 23117 / BGSC 10A6 / LMG 26770 / FZB42) (Bacillus amyloliquefaciens subsp. plantarum) protein is UPF0349 protein RBAM_029300.